The following is a 517-amino-acid chain: Protein disulfide-isomerase EUG1 (517 aa).

The signal sequence occupies residues 1–29 (MQVTTRFISAIVSFCLFASFTLAENSARA). The 112-residue stretch at 30 to 141 (TPGSDLLVLT…ITQYMIQLYE (112 aa)) folds into the Thioredoxin 1 domain. Residues N159, N174, N207, N293, and N462 are each glycosylated (N-linked (GlcNAc...) asparagine). The Thioredoxin 2 domain maps to 355-487 (YREGTAKPIV…VFEFIKESGT (133 aa)). The short motif at 514 to 517 (HDEL) is the Prevents secretion from ER element.

Belongs to the protein disulfide isomerase family. Interacts with EPS1. Post-translationally, may have O-linked mannose residues.

It is found in the endoplasmic reticulum lumen. It catalyses the reaction Catalyzes the rearrangement of -S-S- bonds in proteins.. Its function is as follows. Probably interacts with nascent polypeptides in the endoplasmic reticulum. It is an essential gene only in the absence of PDI. Its native disulfide isomerase activity is very low. The polypeptide is Protein disulfide-isomerase EUG1 (EUG1) (Saccharomyces cerevisiae (strain ATCC 204508 / S288c) (Baker's yeast)).